The chain runs to 306 residues: Agmatinase (306 aa).

Mn(2+) contacts are provided by H126, D149, H151, D153, D230, and D232.

This sequence belongs to the arginase family. Agmatinase subfamily. Requires Mn(2+) as cofactor.

The catalysed reaction is agmatine + H2O = urea + putrescine. The protein operates within amine and polyamine biosynthesis; putrescine biosynthesis via agmatine pathway; putrescine from agmatine: step 1/1. In terms of biological role, catalyzes the formation of putrescine from agmatine. In Escherichia coli (strain K12 / DH10B), this protein is Agmatinase.